A 202-amino-acid polypeptide reads, in one-letter code: Proteasome subunit beta 1 (202 aa).

Position 1 (Met-1) is a propeptide, removed in mature form; by autocatalysis. Residue Thr-2 is the Nucleophile of the active site.

This sequence belongs to the peptidase T1B family. In terms of assembly, the 20S proteasome core is composed of 14 alpha and 14 beta subunits that assemble into four stacked heptameric rings, resulting in a barrel-shaped structure. The two inner rings, each composed of seven catalytic beta subunits, are sandwiched by two outer rings, each composed of seven alpha subunits. The catalytic chamber with the active sites is on the inside of the barrel. Has a gated structure, the ends of the cylinder being occluded by the N-termini of the alpha-subunits. Is capped at one or both ends by the proteasome regulatory ATPase, PAN.

Its subcellular location is the cytoplasm. The catalysed reaction is Cleavage of peptide bonds with very broad specificity.. With respect to regulation, the formation of the proteasomal ATPase PAN-20S proteasome complex, via the docking of the C-termini of PAN into the intersubunit pockets in the alpha-rings, triggers opening of the gate for substrate entry. Interconversion between the open-gate and close-gate conformations leads to a dynamic regulation of the 20S proteasome proteolysis activity. Its function is as follows. Component of the proteasome core, a large protease complex with broad specificity involved in protein degradation. The chain is Proteasome subunit beta 1 from Pyrobaculum arsenaticum (strain DSM 13514 / JCM 11321 / PZ6).